A 216-amino-acid chain; its full sequence is Adenylate kinase (216 aa).

10–15 (GAGKGT) provides a ligand contact to ATP. The tract at residues 30–59 (STGDMLREAVKADTPLGIEAKKVMDVGGLI) is NMP. Residues T31, R36, 57–59 (GLI), 85–88 (GFPR), and Q92 contribute to the AMP site. The LID stretch occupies residues 122–159 (GRRAHLTSGRTYHIVYNPPKVEGIDDITGEELIQRTDD). Residues R123 and 132-133 (TY) each bind ATP. Positions 156 and 167 each coordinate AMP. G202 provides a ligand contact to ATP.

The protein belongs to the adenylate kinase family. As to quaternary structure, monomer.

The protein resides in the cytoplasm. The enzyme catalyses AMP + ATP = 2 ADP. It functions in the pathway purine metabolism; AMP biosynthesis via salvage pathway; AMP from ADP: step 1/1. In terms of biological role, catalyzes the reversible transfer of the terminal phosphate group between ATP and AMP. Plays an important role in cellular energy homeostasis and in adenine nucleotide metabolism. This chain is Adenylate kinase, found in Ruthia magnifica subsp. Calyptogena magnifica.